The sequence spans 523 residues: Cytochrome P450 monooxygenase bsc5 (523 aa).

A helical membrane pass occupies residues 16-36 (MQLHWTVLGLLPVLFIAILGP). Asparagine 178, asparagine 281, and asparagine 403 each carry an N-linked (GlcNAc...) asparagine glycan. Cysteine 459 provides a ligand contact to heme.

Belongs to the cytochrome P450 family. Heme is required as a cofactor.

The protein localises to the membrane. Its pathway is mycotoxin biosynthesis. Its function is as follows. Cytochrome P450 monooxygenase; part of the gene cluster that mediates the biosynthesis of the diterpene glucoside brassicicene C. In the first step of the brassicicene C biosynthesis, the bifunctional diterpene synthase bsc8 that possesses both prenyl transferase and terpene cyclase activity, converts isopentenyl diphosphate and dimethylallyl diphosphate into geranylgeranyl diphosphate (GGDP) that is further converted into fusicocca-2,10(14)-diene, the first precursor for brassicicene C. Fusicocca-2,10(14)-diene is then substrate of cytochrome P450 monooxygenase bsc1 for hydroxylation at the C-8 position. Oxidation at C-16 position to aldehyde is then catalyzed by the cytochrome P450 monooyxygenase bsc7, yielding fusicocca-2,10(14)-diene-8-beta,16-diol. Follows the isomerization of the double bond and reduction of aldehyde to alcohol catalyzed by the short-chain dehydrogenase/reductase bsc3 to yield the diol compound fusicocca-1,10(14)-diene-8 beta,16-diol. The next step is the oxidation at the C-3 position of fusicocca-2,10(14)-diene-8-beta,16-diol catalyzed by the alpha-ketoglutarate dependent dioxygenase bsc9, to produce a triol compound. Methylation of the hydroxy group at position 16 is performed by the methyltransferase bsc6. 16-O-methylation is followed by oxidation at the C-13 position to ketone and an alkyl shift of the methyl group leads to brassicicene C. Although the probable acetyltransferase bsc4 is included in the gene cluster, no acetylation reactions are necessary for brassicicene C biosynthesis. However, the fact that brassicicene E, which is a structurally related compound having an acetoxy group at position 12, was previously isolated from another strain of A.brassicicola suggests that the ATCC 96836 strain might also produce a small amount of brassicicene E. The polypeptide is Cytochrome P450 monooxygenase bsc5 (Alternaria brassicicola (Dark leaf spot agent)).